Consider the following 412-residue polypeptide: DnaJ homolog subfamily A member 2 (412 aa).

The J domain occupies 8–70; sequence KLYDILGVPP…EKRELYDRYG (63 aa). Lys39 bears the N6-acetyllysine mark. Ser78 and Ser123 each carry phosphoserine. The CR-type zinc-finger motif lies at 130–214; that stretch reads GKTTKLQLSK…CEGKKVIKEV (85 aa). Lys134 participates in a covalent cross-link: Glycyl lysine isopeptide (Lys-Gly) (interchain with G-Cter in SUMO2). Positions 143 and 146 each coordinate Zn(2+). The CXXCXGXG motif repeat unit spans residues 143 to 150; sequence CSACSGQG. Lys152 carries the N6-acetyllysine modification. Positions 159, 162, 186, 189, 202, and 205 each coordinate Zn(2+). 3 CXXCXGXG motif repeats span residues 159-166, 186-193, and 202-209; these read CSACRGRG, CSDCNGEG, and CKKCEGKK. The disordered stretch occupies residues 359–412; sequence PEVPNIIGDTEEVELQEFDSTRGSGGGQRREAYNDSSDEESSSHHGPGVQCAHQ. Position 391 is a phosphotyrosine (Tyr391). A phosphoserine mark is found at Ser394 and Ser395. At Cys409 the chain carries Cysteine methyl ester. Cys409 is lipidated: S-farnesyl cysteine. The propeptide at 410–412 is removed in mature form; that stretch reads AHQ.

The protein localises to the membrane. In terms of biological role, co-chaperone of Hsc70. Stimulates ATP hydrolysis and the folding of unfolded proteins mediated by HSPA1A/B (in vitro). In Bos taurus (Bovine), this protein is DnaJ homolog subfamily A member 2 (DNAJA2).